A 103-amino-acid polypeptide reads, in one-letter code: NADH-quinone oxidoreductase subunit K 1 (103 aa).

Transmembrane regions (helical) follow at residues 7–27, 31–51, and 63–83; these read ISWFLTLSAILFALGVAGFLF, IITVFMSIELMLNAVNLSFVT, and LFTFFVMVVAAAEAAVGLAII.

Belongs to the complex I subunit 4L family. In terms of assembly, NDH-1 is composed of 14 different subunits. Subunits NuoA, H, J, K, L, M, N constitute the membrane sector of the complex.

It is found in the cell inner membrane. The catalysed reaction is a quinone + NADH + 5 H(+)(in) = a quinol + NAD(+) + 4 H(+)(out). In terms of biological role, NDH-1 shuttles electrons from NADH, via FMN and iron-sulfur (Fe-S) centers, to quinones in the respiratory chain. The immediate electron acceptor for the enzyme in this species is believed to be ubiquinone. Couples the redox reaction to proton translocation (for every two electrons transferred, four hydrogen ions are translocated across the cytoplasmic membrane), and thus conserves the redox energy in a proton gradient. The protein is NADH-quinone oxidoreductase subunit K 1 of Solibacter usitatus (strain Ellin6076).